The sequence spans 89 residues: Protein S100-A6 (89 aa).

2 EF-hand domains span residues 12-47 and 48-83; these read LVAIFHKYSGKEGDKHTLSKKELKELIQKELTIGSK and LQDAEIARLMDDLDRNKDQEVNFQEYVAFLGALALI. The Ca(2+) site is built by Thr-28 and Glu-33. An N6-acetyllysine modification is found at Lys-40. Ser-46 is modified (phosphoserine). N6-acetyllysine; alternate is present on Lys-47. The residue at position 47 (Lys-47) is an N6-succinyllysine; alternate. Positions 61, 63, 65, 67, and 72 each coordinate Ca(2+).

This sequence belongs to the S-100 family. In terms of assembly, homodimer; head to tail assembly of 2 subunits. Interacts with CACYBP in a calcium-dependent manner. Interacts with ANXA2 and ANXA11 (via N-terminus). Interacts with SUGT1. Interacts with TP53; has higher affinity for TP53 that is phosphorylated on its N-terminal domain, and lower affinity for TP53 that is phosphorylated on its C-terminal domain. Interacts with tropomyosin. Interacts with FKBP4. Interacts with PPP5C (via TPR repeats); the interaction is calcium-dependent and modulates PPP5C activity. Interacts with TPPP; this interaction inhibits TPPP dimerization.

The protein resides in the nucleus envelope. It localises to the cytoplasm. The protein localises to the cell membrane. May function as calcium sensor and modulator, contributing to cellular calcium signaling. May function by interacting with other proteins, such as TPR-containing proteins, and indirectly play a role in many physiological processes such as the reorganization of the actin cytoskeleton and in cell motility. Binds 2 calcium ions. Calcium binding is cooperative. The sequence is that of Protein S100-A6 (S100a6) from Mus musculus (Mouse).